Reading from the N-terminus, the 246-residue chain is 1-(5-phosphoribosyl)-5-[(5-phosphoribosylamino)methylideneamino] imidazole-4-carboxamide isomerase (246 aa).

Catalysis depends on D7, which acts as the Proton acceptor. D130 functions as the Proton donor in the catalytic mechanism.

The protein belongs to the HisA/HisF family.

The protein localises to the cytoplasm. It catalyses the reaction 1-(5-phospho-beta-D-ribosyl)-5-[(5-phospho-beta-D-ribosylamino)methylideneamino]imidazole-4-carboxamide = 5-[(5-phospho-1-deoxy-D-ribulos-1-ylimino)methylamino]-1-(5-phospho-beta-D-ribosyl)imidazole-4-carboxamide. Its pathway is amino-acid biosynthesis; L-histidine biosynthesis; L-histidine from 5-phospho-alpha-D-ribose 1-diphosphate: step 4/9. This is 1-(5-phosphoribosyl)-5-[(5-phosphoribosylamino)methylideneamino] imidazole-4-carboxamide isomerase from Sodalis glossinidius (strain morsitans).